The following is a 487-amino-acid chain: Glutamyl-tRNA(Gln) amidotransferase subunit A (487 aa).

Catalysis depends on charge relay system residues K74 and S149. The active-site Acyl-ester intermediate is the S173.

The protein belongs to the amidase family. GatA subfamily. In terms of assembly, heterotrimer of A, B and C subunits.

The enzyme catalyses L-glutamyl-tRNA(Gln) + L-glutamine + ATP + H2O = L-glutaminyl-tRNA(Gln) + L-glutamate + ADP + phosphate + H(+). Allows the formation of correctly charged Gln-tRNA(Gln) through the transamidation of misacylated Glu-tRNA(Gln) in organisms which lack glutaminyl-tRNA synthetase. The reaction takes place in the presence of glutamine and ATP through an activated gamma-phospho-Glu-tRNA(Gln). The sequence is that of Glutamyl-tRNA(Gln) amidotransferase subunit A from Prochlorococcus marinus (strain MIT 9211).